A 348-amino-acid polypeptide reads, in one-letter code: Dihydroorotase (348 aa).

Residues histidine 17 and histidine 19 each contribute to the Zn(2+) site. Substrate contacts are provided by residues 19–21 (HLR) and asparagine 45. The Zn(2+) site is built by lysine 103, histidine 140, and histidine 178. An N6-carboxylysine modification is found at lysine 103. Position 140 (histidine 140) interacts with substrate. A substrate-binding site is contributed by leucine 223. Aspartate 251 is a Zn(2+) binding site. Residue aspartate 251 is part of the active site. Histidine 255 and alanine 267 together coordinate substrate.

Belongs to the metallo-dependent hydrolases superfamily. DHOase family. Class II DHOase subfamily. In terms of assembly, homodimer. It depends on Zn(2+) as a cofactor.

It carries out the reaction (S)-dihydroorotate + H2O = N-carbamoyl-L-aspartate + H(+). It functions in the pathway pyrimidine metabolism; UMP biosynthesis via de novo pathway; (S)-dihydroorotate from bicarbonate: step 3/3. In terms of biological role, catalyzes the reversible cyclization of carbamoyl aspartate to dihydroorotate. The polypeptide is Dihydroorotase (Salmonella paratyphi A (strain ATCC 9150 / SARB42)).